We begin with the raw amino-acid sequence, 251 residues long: MESYSVKMDAFEGPLDLLLHLIGKLEIDLYDISVSIVTDQYVSYIRAMQHLELDVASEYLVMAATLLQLKSKQLLPVEQTDFEDVPDFEEDPTREGLIQQLIEYKAYKEAALVLKEKEEARLELFSKQPEDLMTYLDPDNQDFSGNLSFSDLLRAYEKMRQRVAWKVRRSKTVKREERTLEQQMIHVSEYVFANEGTTFFGFFTEQPTVEELVVSFLAVLELVKQCVVACEQMSDDILLRALVKEENQIGV.

The protein belongs to the ScpA family. In terms of assembly, component of a cohesin-like complex composed of ScpA, ScpB and the Smc homodimer, in which ScpA and ScpB bind to the head domain of Smc. The presence of the three proteins is required for the association of the complex with DNA.

It localises to the cytoplasm. Its function is as follows. Participates in chromosomal partition during cell division. May act via the formation of a condensin-like complex containing Smc and ScpB that pull DNA away from mid-cell into both cell halves. This Exiguobacterium sibiricum (strain DSM 17290 / CCUG 55495 / CIP 109462 / JCM 13490 / 255-15) protein is Segregation and condensation protein A.